Reading from the N-terminus, the 148-residue chain is 3-hydroxyacyl-[acyl-carrier-protein] dehydratase FabZ (148 aa).

The active site involves H48.

Belongs to the thioester dehydratase family. FabZ subfamily.

The protein resides in the cytoplasm. It carries out the reaction a (3R)-hydroxyacyl-[ACP] = a (2E)-enoyl-[ACP] + H2O. In terms of biological role, involved in unsaturated fatty acids biosynthesis. Catalyzes the dehydration of short chain beta-hydroxyacyl-ACPs and long chain saturated and unsaturated beta-hydroxyacyl-ACPs. The polypeptide is 3-hydroxyacyl-[acyl-carrier-protein] dehydratase FabZ (Campylobacter curvus (strain 525.92)).